A 323-amino-acid polypeptide reads, in one-letter code: 4-hydroxythreonine-4-phosphate dehydrogenase (323 aa).

T133 serves as a coordination point for substrate. A divalent metal cation contacts are provided by H161, H206, and H261. K269, N278, and R287 together coordinate substrate.

This sequence belongs to the PdxA family. As to quaternary structure, homodimer. Zn(2+) is required as a cofactor. It depends on Mg(2+) as a cofactor. Co(2+) serves as cofactor.

Its subcellular location is the cytoplasm. The enzyme catalyses 4-(phosphooxy)-L-threonine + NAD(+) = 3-amino-2-oxopropyl phosphate + CO2 + NADH. It functions in the pathway cofactor biosynthesis; pyridoxine 5'-phosphate biosynthesis; pyridoxine 5'-phosphate from D-erythrose 4-phosphate: step 4/5. In terms of biological role, catalyzes the NAD(P)-dependent oxidation of 4-(phosphooxy)-L-threonine (HTP) into 2-amino-3-oxo-4-(phosphooxy)butyric acid which spontaneously decarboxylates to form 3-amino-2-oxopropyl phosphate (AHAP). This chain is 4-hydroxythreonine-4-phosphate dehydrogenase, found in Xanthomonas axonopodis pv. citri (strain 306).